A 469-amino-acid chain; its full sequence is 3-isopropylmalate dehydratase large subunit (469 aa).

[4Fe-4S] cluster is bound by residues Cys-347, Cys-410, and Cys-413.

This sequence belongs to the aconitase/IPM isomerase family. LeuC type 1 subfamily. Heterodimer of LeuC and LeuD. It depends on [4Fe-4S] cluster as a cofactor.

The enzyme catalyses (2R,3S)-3-isopropylmalate = (2S)-2-isopropylmalate. The protein operates within amino-acid biosynthesis; L-leucine biosynthesis; L-leucine from 3-methyl-2-oxobutanoate: step 2/4. Functionally, catalyzes the isomerization between 2-isopropylmalate and 3-isopropylmalate, via the formation of 2-isopropylmaleate. The polypeptide is 3-isopropylmalate dehydratase large subunit (Burkholderia vietnamiensis (strain G4 / LMG 22486) (Burkholderia cepacia (strain R1808))).